A 416-amino-acid chain; its full sequence is Gamma-glutamyl phosphate reductase (416 aa).

This sequence belongs to the gamma-glutamyl phosphate reductase family.

It is found in the cytoplasm. It catalyses the reaction L-glutamate 5-semialdehyde + phosphate + NADP(+) = L-glutamyl 5-phosphate + NADPH + H(+). It functions in the pathway amino-acid biosynthesis; L-proline biosynthesis; L-glutamate 5-semialdehyde from L-glutamate: step 2/2. Functionally, catalyzes the NADPH-dependent reduction of L-glutamate 5-phosphate into L-glutamate 5-semialdehyde and phosphate. The product spontaneously undergoes cyclization to form 1-pyrroline-5-carboxylate. The chain is Gamma-glutamyl phosphate reductase from Vibrio parahaemolyticus serotype O3:K6 (strain RIMD 2210633).